The sequence spans 109 residues: Spermidine export protein MdtI (109 aa).

Helical transmembrane passes span 6-26 (WIHA…NVFL), 36-56 (WFGL…SQAV), 64-84 (AYAL…WVLF), and 88-108 (LNRK…MIKL).

Belongs to the drug/metabolite transporter (DMT) superfamily. Small multidrug resistance (SMR) (TC 2.A.7.1) family. MdtI subfamily. As to quaternary structure, forms a complex with MdtJ.

Its subcellular location is the cell inner membrane. Catalyzes the excretion of spermidine. This Enterobacter sp. (strain 638) protein is Spermidine export protein MdtI.